The sequence spans 180 residues: Succinate dehydrogenase cytochrome B subunit, mitochondrial (180 aa).

Over 1–82 (MFATRSFCLS…WYLSSLHRIT (82 aa)) the chain is Mitochondrial matrix. Residues 83–103 (GCVVAGTLYAFAMGYLVAPLA) traverse the membrane as a helical segment. At 104-122 (GYSLDTATISGLIQQVPTW) the chain is on the mitochondrial intermembrane side. A helical membrane pass occupies residues 123–143 (IKVPAKFVISYPLTFHIFNGI). Histidine 138 serves as a coordination point for heme. Residues 144 to 159 (RHLIWDTTKELSLKGV) lie on the Mitochondrial matrix side of the membrane. The helical transmembrane segment at 160 to 180 (YRTGYAVLALSVLTSGYFAMI) threads the bilayer.

Belongs to the cytochrome b560 family. As to quaternary structure, forms part of complex II containing four subunits: a 70 kDa flavoprotein (FP), a 27 kDa iron-sulfur protein (IP), a cytochrome B and a membrane-anchoring protein. The cofactor is heme.

It is found in the mitochondrion inner membrane. It participates in carbohydrate metabolism; tricarboxylic acid cycle. In terms of biological role, membrane-anchoring subunit of succinate dehydrogenase (SDH) that is involved in complex II of the mitochondrial electron transport chain and is responsible for transferring electrons from succinate to ubiquinone (coenzyme Q). This is Succinate dehydrogenase cytochrome B subunit, mitochondrial (sdh3) from Schizosaccharomyces pombe (strain 972 / ATCC 24843) (Fission yeast).